The following is a 159-amino-acid chain: 2-C-methyl-D-erythritol 2,4-cyclodiphosphate synthase (159 aa).

Residues Asp-8 and His-10 each contribute to the a divalent metal cation site. 4-CDP-2-C-methyl-D-erythritol 2-phosphate-binding positions include 8 to 10 (DVH) and 34 to 35 (HS). An a divalent metal cation-binding site is contributed by His-42. 4-CDP-2-C-methyl-D-erythritol 2-phosphate is bound by residues 56 to 58 (DIG), 61 to 65 (FPDTD), 100 to 106 (AQAPKML), 132 to 135 (TTTE), Phe-139, and Arg-142.

The protein belongs to the IspF family. Homotrimer. A divalent metal cation is required as a cofactor.

It carries out the reaction 4-CDP-2-C-methyl-D-erythritol 2-phosphate = 2-C-methyl-D-erythritol 2,4-cyclic diphosphate + CMP. The protein operates within isoprenoid biosynthesis; isopentenyl diphosphate biosynthesis via DXP pathway; isopentenyl diphosphate from 1-deoxy-D-xylulose 5-phosphate: step 4/6. In terms of biological role, involved in the biosynthesis of isopentenyl diphosphate (IPP) and dimethylallyl diphosphate (DMAPP), two major building blocks of isoprenoid compounds. Catalyzes the conversion of 4-diphosphocytidyl-2-C-methyl-D-erythritol 2-phosphate (CDP-ME2P) to 2-C-methyl-D-erythritol 2,4-cyclodiphosphate (ME-CPP) with a corresponding release of cytidine 5-monophosphate (CMP). The protein is 2-C-methyl-D-erythritol 2,4-cyclodiphosphate synthase of Escherichia coli O139:H28 (strain E24377A / ETEC).